Reading from the N-terminus, the 110-residue chain is DNA-binding protein Mhun_3016 (110 aa).

Belongs to the PDCD5 family.

The protein is DNA-binding protein Mhun_3016 of Methanospirillum hungatei JF-1 (strain ATCC 27890 / DSM 864 / NBRC 100397 / JF-1).